The sequence spans 177 residues: Bifunctional protein PyrR (177 aa).

The short motif at 99–111 (VVLVDDVIYKGRT) is the PRPP-binding element.

Belongs to the purine/pyrimidine phosphoribosyltransferase family. PyrR subfamily.

The enzyme catalyses UMP + diphosphate = 5-phospho-alpha-D-ribose 1-diphosphate + uracil. In terms of biological role, regulates the transcription of the pyrimidine nucleotide (pyr) operon in response to exogenous pyrimidines. Also displays a weak uracil phosphoribosyltransferase activity which is not physiologically significant. This chain is Bifunctional protein PyrR, found in Gloeothece citriformis (strain PCC 7424) (Cyanothece sp. (strain PCC 7424)).